Here is an 89-residue protein sequence, read N- to C-terminus: MSVEEQFKTSAEQVKKLKSSPSDTELLELYSLYKQATIGDVNTDRPGMLYLKEKAKWDAWNGRKGLGKEQAQELYVKKVKELVEKNGLA.

In terms of domain architecture, ACB spans 3 to 88 (VEEQFKTSAE…VKELVEKNGL (86 aa)). Residues Lys15, 30–34 (YSLYK), Lys52, Lys56, and Tyr75 contribute to the an acyl-CoA site.

Belongs to the ACBP family.

Its function is as follows. Binds medium- and long-chain acyl-CoA esters with very high affinity and may function as an intracellular carrier of acyl-CoA esters. The polypeptide is Putative acyl-CoA-binding protein (Hypsibius exemplaris (Freshwater tardigrade)).